A 1624-amino-acid chain; its full sequence is Latent-transforming growth factor beta-binding protein 4 (1624 aa).

Residues M1–A27 form the signal peptide. The segment at R125–A146 is disordered. The 33-residue stretch at A149–Q181 folds into the EGF-like 1 domain. Disulfide bonds link C153–C163, C157–C169, C171–C180, C289–C311, C298–C324, and C312–C327. One can recognise a TB 1 domain in the interval G287–A339. N352 carries an N-linked (GlcNAc...) asparagine glycan. Residues D357–I397 enclose the EGF-like 2; calcium-binding domain. Disulfide bonds link C361–C372, C367–C381, C383–C396, C409–C431, C418–C444, C432–C447, and C433–C459. In terms of domain architecture, TB 2 spans G407–C459. A glycan (N-linked (GlcNAc...) asparagine) is linked at N425. Residues Y474 to S546 are disordered. Polar residues predominate over residues S487–P500. Positions H508 to P522 are enriched in basic and acidic residues. An EGF-like 3 domain is found at S545–I586. 30 cysteine pairs are disulfide-bonded: C549–C561, C556–C570, C572–C585, C591–C603, C598–C612, C614–C627, C633–C645, C640–C654, C656–C669, C675–C687, C682–C696, C698–C707, C714–C726, C721–C735, C737–C750, C756–C768, C763–C777, C779–C792, C838–C851, C845–C860, C862–C876, C882–C894, C888–C903, C905–C918, C924–C935, C930–C944, C946–C959, C1053–C1065, C1059–C1074, and C1076–C1089. Residues D587–L628 enclose the EGF-like 4; calcium-binding domain. The 42-residue stretch at D629–Q670 folds into the EGF-like 5; calcium-binding domain. Residues D671–E708 form the EGF-like 6; calcium-binding domain. The EGF-like 7; calcium-binding domain occupies D710 to Q751. The region spanning D752–E793 is the EGF-like 8; calcium-binding domain. Residues D834–A877 form the EGF-like 9; calcium-binding domain. The EGF-like 10; calcium-binding domain occupies D878 to L919. The 41-residue stretch at D920–L960 folds into the EGF-like 11; calcium-binding domain. In terms of domain architecture, EGF-like 12; calcium-binding spans D1049–V1090. Residue N1055 is glycosylated (N-linked (GlcNAc...) asparagine). The segment at G1130–G1179 is disordered. Residues S1138–A1149 show a composition bias toward polar residues. Residues P1156–P1168 are compositionally biased toward pro residues. A TB 3 domain is found at R1181–C1235. Disulfide bonds link C1183-C1206, C1193-C1218, C1207-C1223, C1208-C1235, C1257-C1270, C1265-C1279, C1281-C1294, C1300-C1312, C1307-C1321, and C1323-C1336. An N-linked (GlcNAc...) asparagine glycan is attached at N1200. Residues D1253–I1295 enclose the EGF-like 13; calcium-binding domain. The EGF-like 14; calcium-binding domain maps to D1296 to V1337. N1339 carries N-linked (GlcNAc...) asparagine glycosylation. The TB 4 domain occupies G1349 to C1402. 4 disulfide bridges follow: C1351/C1375, C1361/C1387, C1376/C1390, and C1377/C1402. Over residues A1446–P1458 the composition is skewed to pro residues. Residues A1446 to S1524 form a disordered region. A compositionally biased stretch (basic and acidic residues) spans R1501 to P1510. 2 EGF-like domains span residues E1533–V1573 and D1574–A1618. Cystine bridges form between C1537–C1548, C1543–C1557, C1559–C1572, C1578–C1593, C1588–C1602, and C1604–C1617.

Belongs to the LTBP family. Forms part of the large latent transforming growth factor beta precursor complex; removal is essential for activation of complex. Interacts with LTBP1 and TGFB1. Interacts with EFEMP2; this interaction promotes fibrillar deposition of EFEMP2. Post-translationally, contains hydroxylated asparagine residues. In terms of tissue distribution, highly expressed in heart, skeletal muscle, pancreas, uterus, and small intestine. Weakly expressed in placenta and lung.

Its subcellular location is the secreted. It is found in the extracellular space. The protein resides in the extracellular matrix. In terms of biological role, key regulator of transforming growth factor beta (TGFB1, TGFB2 and TGFB3) that controls TGF-beta activation by maintaining it in a latent state during storage in extracellular space. Associates specifically via disulfide bonds with the Latency-associated peptide (LAP), which is the regulatory chain of TGF-beta, and regulates integrin-dependent activation of TGF-beta. This is Latent-transforming growth factor beta-binding protein 4 (LTBP4) from Homo sapiens (Human).